Here is a 614-residue protein sequence, read N- to C-terminus: Dolichyl-diphosphooligosaccharide--protein glycosyltransferase subunit 1A (614 aa).

The signal sequence occupies residues 1 to 25 (MKQSSVVDLLLLLLAIALLATPAFS). The Lumenal portion of the chain corresponds to 26-432 (DLVLSKVERR…QVYYKFSNIN (407 aa)). N-linked (GlcNAc...) asparagine glycans are attached at residues N94 and N299. A Glycyl lysine isopeptide (Lys-Gly) (interchain with G-Cter in ubiquitin) cross-link involves residue K311. Residue N352 is glycosylated (N-linked (GlcNAc...) asparagine). A helical membrane pass occupies residues 433–453 (LLSEPLMLISGFFILFITCII). Over 454 to 614 (YTRADISISK…EDLLEFIDEI (161 aa)) the chain is Cytoplasmic.

It belongs to the OST1 family. As to quaternary structure, component of the oligosaccharyltransferase (OST) complex.

The protein localises to the endoplasmic reticulum membrane. Its pathway is protein modification; protein glycosylation. Its function is as follows. Subunit of the oligosaccharyl transferase (OST) complex that catalyzes the initial transfer of a defined glycan (Glc(3)Man(9)GlcNAc(2) in eukaryotes) from the lipid carrier dolichol-pyrophosphate to an asparagine residue within an Asn-X-Ser/Thr consensus motif in nascent polypeptide chains, the first step in protein N-glycosylation. N-glycosylation occurs cotranslationally and the complex associates with the Sec61 complex at the channel-forming translocon complex that mediates protein translocation across the endoplasmic reticulum (ER). All subunits are required for a maximal enzyme activity. This chain is Dolichyl-diphosphooligosaccharide--protein glycosyltransferase subunit 1A (OST1A), found in Arabidopsis thaliana (Mouse-ear cress).